The chain runs to 428 residues: tRNA modification GTPase MnmE (428 aa).

(6S)-5-formyl-5,6,7,8-tetrahydrofolate-binding residues include arginine 20, glutamate 77, and lysine 117. Residues 213–351 (GFEIALVGAP…LLEKIRSVFS (139 aa)) form the TrmE-type G domain. A K(+)-binding site is contributed by asparagine 223. Residues 223-228 (NAGKST), 242-248 (SEIAGTT), and 267-270 (DTAG) each bind GTP. Serine 227 lines the Mg(2+) pocket. Serine 242, isoleucine 244, and threonine 247 together coordinate K(+). Residue threonine 248 participates in Mg(2+) binding. (6S)-5-formyl-5,6,7,8-tetrahydrofolate is bound at residue lysine 428.

Belongs to the TRAFAC class TrmE-Era-EngA-EngB-Septin-like GTPase superfamily. TrmE GTPase family. As to quaternary structure, homodimer. Heterotetramer of two MnmE and two MnmG subunits. Requires K(+) as cofactor.

The protein localises to the cytoplasm. Exhibits a very high intrinsic GTPase hydrolysis rate. Involved in the addition of a carboxymethylaminomethyl (cmnm) group at the wobble position (U34) of certain tRNAs, forming tRNA-cmnm(5)s(2)U34. This Roseobacter denitrificans (strain ATCC 33942 / OCh 114) (Erythrobacter sp. (strain OCh 114)) protein is tRNA modification GTPase MnmE.